The primary structure comprises 80 residues: NAD(P)H-quinone oxidoreductase subunit O (80 aa).

The protein belongs to the complex I NdhO subunit family. In terms of assembly, NDH-1 can be composed of about 15 different subunits; different subcomplexes with different compositions have been identified which probably have different functions.

Its subcellular location is the cellular thylakoid membrane. It catalyses the reaction a plastoquinone + NADH + (n+1) H(+)(in) = a plastoquinol + NAD(+) + n H(+)(out). It carries out the reaction a plastoquinone + NADPH + (n+1) H(+)(in) = a plastoquinol + NADP(+) + n H(+)(out). Functionally, NDH-1 shuttles electrons from an unknown electron donor, via FMN and iron-sulfur (Fe-S) centers, to quinones in the respiratory and/or the photosynthetic chain. The immediate electron acceptor for the enzyme in this species is believed to be plastoquinone. Couples the redox reaction to proton translocation, and thus conserves the redox energy in a proton gradient. Cyanobacterial NDH-1 also plays a role in inorganic carbon-concentration. The chain is NAD(P)H-quinone oxidoreductase subunit O from Prochlorococcus marinus subsp. pastoris (strain CCMP1986 / NIES-2087 / MED4).